The following is a 250-amino-acid chain: 5-oxoprolinase subunit A (250 aa).

The protein belongs to the LamB/PxpA family. Forms a complex composed of PxpA, PxpB and PxpC.

It catalyses the reaction 5-oxo-L-proline + ATP + 2 H2O = L-glutamate + ADP + phosphate + H(+). In terms of biological role, catalyzes the cleavage of 5-oxoproline to form L-glutamate coupled to the hydrolysis of ATP to ADP and inorganic phosphate. This Streptomyces avermitilis (strain ATCC 31267 / DSM 46492 / JCM 5070 / NBRC 14893 / NCIMB 12804 / NRRL 8165 / MA-4680) protein is 5-oxoprolinase subunit A.